A 321-amino-acid polypeptide reads, in one-letter code: Leucine-rich repeat-containing protein 46 (321 aa).

LRR repeat units lie at residues 45–66 (ELQT…EGLQ), 67–88 (NLHS…ACIP), 89–110 (SLRF…LDLP), and 111–132 (CLQF…EFPQ). The 43-residue stretch at 142–184 (NSCTNQDGYRELVTEALPLLLDLDGQPVVERWISDEEDEASSD) folds into the LRRCT domain. 2 positions are modified to phosphoserine: Ser175 and Ser182. Residues 201 to 221 (LKELEQELSRHREHRQQTALT) adopt a coiled-coil conformation. Residues 235–321 (DLPLLPGVPM…TKTTAKRSKK (87 aa)) form a disordered region.

The protein resides in the cell projection. It localises to the cilium. Its subcellular location is the flagellum. In terms of biological role, required for normal spermatogenesis and male fertility. Plays an important role in sperm flagellum biogenesis. The chain is Leucine-rich repeat-containing protein 46 (LRRC46) from Homo sapiens (Human).